A 446-amino-acid polypeptide reads, in one-letter code: Light-independent protochlorophyllide reductase subunit N (446 aa).

[4Fe-4S] cluster is bound by residues cysteine 22, cysteine 47, and cysteine 107.

This sequence belongs to the BchN/ChlN family. In terms of assembly, protochlorophyllide reductase is composed of three subunits; ChlL, ChlN and ChlB. Forms a heterotetramer of two ChlB and two ChlN subunits. Requires [4Fe-4S] cluster as cofactor.

The protein resides in the plastid. The protein localises to the chloroplast. The catalysed reaction is chlorophyllide a + oxidized 2[4Fe-4S]-[ferredoxin] + 2 ADP + 2 phosphate = protochlorophyllide a + reduced 2[4Fe-4S]-[ferredoxin] + 2 ATP + 2 H2O. It participates in porphyrin-containing compound metabolism; chlorophyll biosynthesis (light-independent). Functionally, component of the dark-operative protochlorophyllide reductase (DPOR) that uses Mg-ATP and reduced ferredoxin to reduce ring D of protochlorophyllide (Pchlide) to form chlorophyllide a (Chlide). This reaction is light-independent. The NB-protein (ChlN-ChlB) is the catalytic component of the complex. The chain is Light-independent protochlorophyllide reductase subunit N from Mesostigma viride (Green alga).